A 145-amino-acid polypeptide reads, in one-letter code: uncharacterized protein (145 aa).

Transmembrane regions (helical) follow at residues 1 to 21 (MELFKSIVAVIGIIATIYFLI), 28 to 48 (TVLIGVGLIMSILTLNPMGAL), 54 to 74 (SMTSGGLIMAICSSMGFAYVM), and 96 to 116 (FFLIPIATIITFFINIAIPSA).

This sequence belongs to the DcuC/DcuD transporter (TC 2.A.61) family.

Its subcellular location is the cell membrane. This is an uncharacterized protein from Haemophilus influenzae (strain ATCC 51907 / DSM 11121 / KW20 / Rd).